The chain runs to 241 residues: Zinc finger CCHC domain-containing protein 24 (241 aa).

2 positions are modified to phosphoserine: Ser-65 and Ser-93. Residues 132 to 149 (YLCHLCFNKGHYIKDCPQ) form a CCHC-type zinc finger.

This Macaca fascicularis (Crab-eating macaque) protein is Zinc finger CCHC domain-containing protein 24 (ZCCHC24).